Consider the following 916-residue polypeptide: DNA mismatch repair protein MutS (916 aa).

ATP is bound at residue 665-672; sequence GPNMAGKS.

Belongs to the DNA mismatch repair MutS family.

Functionally, this protein is involved in the repair of mismatches in DNA. It is possible that it carries out the mismatch recognition step. This protein has a weak ATPase activity. The protein is DNA mismatch repair protein MutS of Bradyrhizobium sp. (strain ORS 278).